A 697-amino-acid polypeptide reads, in one-letter code: Elongation factor G (697 aa).

Residues 8–283 (ERMRNIGIAA…AVVDYLPSPL (276 aa)) enclose the tr-type G domain. GTP contacts are provided by residues 17-24 (AHIDAGKT), 81-85 (DTPGH), and 135-138 (NKMD).

The protein belongs to the TRAFAC class translation factor GTPase superfamily. Classic translation factor GTPase family. EF-G/EF-2 subfamily.

It is found in the cytoplasm. Functionally, catalyzes the GTP-dependent ribosomal translocation step during translation elongation. During this step, the ribosome changes from the pre-translocational (PRE) to the post-translocational (POST) state as the newly formed A-site-bound peptidyl-tRNA and P-site-bound deacylated tRNA move to the P and E sites, respectively. Catalyzes the coordinated movement of the two tRNA molecules, the mRNA and conformational changes in the ribosome. The protein is Elongation factor G of Solibacter usitatus (strain Ellin6076).